The following is a 311-amino-acid chain: Aspartate carbamoyltransferase catalytic subunit (311 aa).

Carbamoyl phosphate-binding residues include Arg55 and Thr56. Lys85 lines the L-aspartate pocket. Residues Arg106, His135, and Gln138 each contribute to the carbamoyl phosphate site. 2 residues coordinate L-aspartate: Arg168 and Arg230. Carbamoyl phosphate-binding residues include Leu268 and Pro269.

This sequence belongs to the aspartate/ornithine carbamoyltransferase superfamily. ATCase family. Heterododecamer (2C3:3R2) of six catalytic PyrB chains organized as two trimers (C3), and six regulatory PyrI chains organized as three dimers (R2).

It carries out the reaction carbamoyl phosphate + L-aspartate = N-carbamoyl-L-aspartate + phosphate + H(+). The protein operates within pyrimidine metabolism; UMP biosynthesis via de novo pathway; (S)-dihydroorotate from bicarbonate: step 2/3. In terms of biological role, catalyzes the condensation of carbamoyl phosphate and aspartate to form carbamoyl aspartate and inorganic phosphate, the committed step in the de novo pyrimidine nucleotide biosynthesis pathway. This chain is Aspartate carbamoyltransferase catalytic subunit, found in Salmonella dublin (strain CT_02021853).